Reading from the N-terminus, the 176-residue chain is Ribosome rescue factor SmrB (176 aa).

Residues 97-172 (LDMHGMTQQE…GDGALLVLLS (76 aa)) form the Smr domain.

The protein belongs to the SmrB family. In terms of assembly, associates with collided ribosomes, but not with correctly translating polysomes.

In terms of biological role, acts as a ribosome collision sensor. Detects stalled/collided disomes (pairs of ribosomes where the leading ribosome is stalled and a second ribosome has collided with it) and endonucleolytically cleaves mRNA at the 5' boundary of the stalled ribosome. Stalled/collided disomes form a new interface (primarily via the 30S subunits) that binds SmrB. Cleaved mRNA becomes available for tmRNA ligation, leading to ribosomal subunit dissociation and rescue of stalled ribosomes. The sequence is that of Ribosome rescue factor SmrB from Vibrio vulnificus (strain YJ016).